Reading from the N-terminus, the 399-residue chain is uncharacterized protein (399 aa).

9 helical membrane passes run 46-66 (IAPY…FFIV), 76-95 (TLPR…YQTM), 139-159 (GVGY…FWMA), 181-201 (IIII…FWTF), 226-246 (LMLN…TCFF), 262-282 (ILPA…SFIW), 303-323 (VQFS…LAHM), 330-350 (IIQA…INYF), and 352-372 (GTII…SFVH).

This sequence belongs to the CDP-alcohol phosphatidyltransferase class-I family.

The protein localises to the membrane. This is an uncharacterized protein from Dictyostelium discoideum (Social amoeba).